Here is a 66-residue protein sequence, read N- to C-terminus: Phylloseptin-S2 (66 aa).

The signal sequence occupies residues 1–22 (MAFLKKSLFLVLFLGLVSLSIC). Residues 23 to 46 (EEEKRETEEEEHDQEEDDKSEEKR) constitute a propeptide that is removed on maturation. The disordered stretch occupies residues 25 to 44 (EKRETEEEEHDQEEDDKSEE). The segment covering 30–41 (EEEEHDQEEDDK) has biased composition (acidic residues). Phe65 bears the Phenylalanine amide mark.

Expressed by the skin glands.

It is found in the secreted. Its subcellular location is the target cell membrane. In terms of biological role, antimicrobial peptide with high activity against Gram-positive bacteria, moderate activity against Gram-negative bacteria, and moderate activity against fungi. Acts by causing bacterial membrane disruption inducing leakage of the intracellular content followed by cell death. It adopts an alpha-helical amphipathic structure in membrane environments. Also shows highly potent antiparasitic activity against Leishmania species. Shows moderate hemolytic activity on human erythrocytes (LC(50)=25 uM). Is also active on human monocytes (IC(50)=22.5 uM). The chain is Phylloseptin-S2 from Phyllomedusa sauvagei (Sauvage's leaf frog).